Here is a 506-residue protein sequence, read N- to C-terminus: TOM1-like protein 3 (506 aa).

The VHS domain occupies 12 to 141 (ATNDMLIGPD…ELRSAGIEFP (130 aa)). The GAT domain occupies 180–268 (DASALSMEEI…VLQHHDDKAK (89 aa)). 3 disordered regions span residues 266 to 328 (KAKG…PPSS), 351 to 384 (ETFE…SKSP), and 398 to 477 (EQLP…PEDI). Residues 288 to 298 (DDDDDESDDDF) show a composition bias toward acidic residues. Phosphoserine is present on S294. A compositionally biased stretch (polar residues) spans 358-368 (PPSTSQSSNHD). Residue S383 is modified to Phosphoserine. Positions 450–460 (QSRNLSLNPTA) are enriched in polar residues. Over residues 468–477 (PKKDDKPEDI) the composition is skewed to basic and acidic residues.

It belongs to the TOM1 family. In terms of tissue distribution, preferentially expressed in cauline leaves.

It localises to the membrane. In terms of biological role, might contribute to the loading of the ESCRT machinery. This is TOM1-like protein 3 from Arabidopsis thaliana (Mouse-ear cress).